The sequence spans 64 residues: Large ribosomal subunit protein bL35 (64 aa).

It belongs to the bacterial ribosomal protein bL35 family.

This is Large ribosomal subunit protein bL35 from Alcanivorax borkumensis (strain ATCC 700651 / DSM 11573 / NCIMB 13689 / SK2).